We begin with the raw amino-acid sequence, 338 residues long: MLGKIALEEAFALPRFEEKTRWWASLFSTDAETHVKEITDINKIRIEHADKHGVGYQILSYTAPGVQDIWDPVEAQALAVEINDYIAEQVRVNPDRFGAFATLSMHNPKEAADELRRCVEKYGFKGALVNDTQRAGPDGDDMIFYDNADWDIFWQTCTELDVPFYMHPRNPTGTIYEKLWADRKWLVGPPLSFAHGVSLHVLGMVTNGVFDRHPKLQIIMGHLGEHVPFDMWRINHWFEDRKKLLGLAETCKKTIRDYFAENIWITTSGHFSTTTLNFCMAEVGSDRILFSIDYPFETFSDACEWFDNAELNGTDRLKIGRENAKKLFKLDSYKDSSA.

Cys251 is a catalytic residue.

The protein belongs to the metallo-dependent hydrolases superfamily. In terms of assembly, homotetramer.

It carries out the reaction 2,3-dihydroxybenzoate + H(+) = catechol + CO2. It participates in aromatic compound metabolism; benzoate degradation via hydroxylation. Has an absolute substrate specificity for 2,3-DHBA. The polypeptide is 2,3-dihydroxybenzoate decarboxylase (Aspergillus oryzae (strain ATCC 42149 / RIB 40) (Yellow koji mold)).